A 446-amino-acid polypeptide reads, in one-letter code: Maltoporin (446 aa).

Residues 1 to 25 (MMITLRKLPLAVAVAAGVMSAQAMA) form the signal peptide.

Belongs to the porin LamB (TC 1.B.3) family. Homotrimer formed of three 18-stranded antiparallel beta-barrels, containing three independent channels.

The protein resides in the cell outer membrane. It catalyses the reaction beta-maltose(in) = beta-maltose(out). Functionally, involved in the transport of maltose and maltodextrins. This Escherichia coli O6:K15:H31 (strain 536 / UPEC) protein is Maltoporin.